The primary structure comprises 132 residues: MSGWNAYIDTMTAAAPSIKRCAIVGAADGSVWARTEADNVFKASEEELKTFVALFNDVTQVPAKGADIEGVHYVVPRTEESLIFGKKENTGFFAVKTKSAVLIAVYEGPNEVAAQVRKAVESMQTYLNNAGY.

Belongs to the profilin family. Occurs in many kinds of cells as a complex with monomeric actin in a 1:1 ratio. As to expression, expressed in the nerve ring during late embryonic stages. In adults, expression is seen in the neurons, vulva and somatic gonad.

It localises to the cytoplasm. The protein resides in the cytoskeleton. In terms of biological role, binds to actin and affects the structure of the cytoskeleton. At high concentrations, profilin prevents the polymerization of actin, whereas it enhances it at low concentrations. By binding to PIP2, it inhibits the formation of IP3 and DG. Also binds to poly(L-proline) and phosphatidylinositol 4,5-bisphosphate micelles. The sequence is that of Profilin-1 (pfn-1) from Caenorhabditis elegans.